Consider the following 633-residue polypeptide: Probable potassium transport system protein Kup (633 aa).

The next 12 membrane-spanning stretches (helical) occupy residues 19–39 (LGML…SPLY), 61–81 (ILAL…VLFI), 112–132 (VLVI…MITP), 148–168 (SGLE…LFLI), 179–199 (LFGP…INGI), 217–237 (FFIV…LALT), 258–278 (WFAL…ALLL), 290–310 (LLAP…ATVI), 348–368 (IYIG…VLGF), 380–400 (VAVT…MLLL), 405–425 (PVLA…FFAA), and 430–450 (IFQG…LMTT).

The protein belongs to the HAK/KUP transporter (TC 2.A.72) family.

The protein localises to the cell inner membrane. It catalyses the reaction K(+)(in) + H(+)(in) = K(+)(out) + H(+)(out). Transport of potassium into the cell. Likely operates as a K(+):H(+) symporter. This chain is Probable potassium transport system protein Kup, found in Pseudomonas fluorescens (strain ATCC BAA-477 / NRRL B-23932 / Pf-5).